The primary structure comprises 78 residues: Omega-conotoxin-like Ac6.5 (78 aa).

The first 22 residues, 1–22, serve as a signal peptide directing secretion; the sequence is MKLTCVVIVAVLLLTACQLLTA. The propeptide occupies 23–42; sequence DDSRGTQKHRSLRSTTKVSK. 3 disulfide bridges follow: Cys-46–Cys-62, Cys-53–Cys-65, and Cys-61–Cys-72. 2 positions are modified to 4-hydroxyproline: Pro-55 and Pro-67.

This sequence belongs to the conotoxin O1 superfamily. As to expression, expressed by the venom duct.

Its subcellular location is the secreted. Omega-conotoxins act at presynaptic membranes, they bind and block voltage-gated calcium channels (Cav). The protein is Omega-conotoxin-like Ac6.5 of Conus achatinus (Little frog cone).